The sequence spans 502 residues: Activin receptor type-1-like (502 aa).

Positions 1 to 22 are cleaved as a signal peptide; that stretch reads MTLGSFRRGLLMLSVAFGLTRG. At 23–119 the chain is on the extracellular side; it reads DLAKPSKLVN…EEPEVDAHLP (97 aa). An N-linked (GlcNAc...) asparagine glycan is attached at N32. Intrachain disulfides connect C33-C50, C35-C40, and C45-C68. Residues 72–75 are mediates specificity for BMP ligand; it reads NQEL. 2 cysteine pairs are disulfide-bonded: C76–C88 and C89–C94. N97 is a glycosylation site (N-linked (GlcNAc...) asparagine). The helical transmembrane segment at 120–140 threads the bilayer; it reads LILGPVLALPVLVALGALGLW. Residues 141 to 502 lie on the Cytoplasmic side of the membrane; that stretch reads RVRRRQEKQR…HNPEKPKVIH (362 aa). A phosphoserine mark is found at S154, S159, and S160. The GS domain occupies 171 to 200; sequence SMLGDFLDSDCTTGSGSGLPFLVQRTVARQ. The Protein kinase domain maps to 201 to 502; that stretch reads VALVECVGKG…HNPEKPKVIH (302 aa). ATP contacts are provided by residues 207 to 215 and K228; that span reads VGKGRYGEV. D329 (proton acceptor) is an active-site residue.

It belongs to the protein kinase superfamily. TKL Ser/Thr protein kinase family. TGFB receptor subfamily. As to quaternary structure, interacts with TSC22D1/TSC-22. The cofactor is Mg(2+). It depends on Mn(2+) as a cofactor.

Its subcellular location is the cell membrane. The catalysed reaction is L-threonyl-[receptor-protein] + ATP = O-phospho-L-threonyl-[receptor-protein] + ADP + H(+). It carries out the reaction L-seryl-[receptor-protein] + ATP = O-phospho-L-seryl-[receptor-protein] + ADP + H(+). Its function is as follows. Type I receptor for TGF-beta family ligands BMP9/GDF2 and BMP10 and important regulator of normal blood vessel development. On ligand binding, forms a receptor complex consisting of two type II and two type I transmembrane serine/threonine kinases. Type II receptors phosphorylate and activate type I receptors which autophosphorylate, then bind and activate SMAD transcriptional regulators. May bind activin as well. This is Activin receptor type-1-like (Acvrl1) from Mus musculus (Mouse).